The following is a 293-amino-acid chain: Protease HtpX (293 aa).

2 helical membrane passes run 2–22 and 38–58; these read FRIL…SVTL and LTSL…ISLF. H145 serves as a coordination point for Zn(2+). The active site involves E146. H149 is a binding site for Zn(2+). The next 2 membrane-spanning stretches (helical) occupy residues 156–176 and 193–213; these read VTLA…ARII and IGFF…ASII. E222 lines the Zn(2+) pocket.

The protein belongs to the peptidase M48B family. Zn(2+) serves as cofactor.

The protein localises to the cell inner membrane. In Hahella chejuensis (strain KCTC 2396), this protein is Protease HtpX.